Reading from the N-terminus, the 355-residue chain is Protein RecA (355 aa).

Residue 67-74 (GPESSGKT) participates in ATP binding.

It belongs to the RecA family.

The protein resides in the cytoplasm. Functionally, can catalyze the hydrolysis of ATP in the presence of single-stranded DNA, the ATP-dependent uptake of single-stranded DNA by duplex DNA, and the ATP-dependent hybridization of homologous single-stranded DNAs. It interacts with LexA causing its activation and leading to its autocatalytic cleavage. The sequence is that of Protein RecA from Shewanella baltica (strain OS195).